Here is a 105-residue protein sequence, read N- to C-terminus: Intracellular chorismate mutase (105 aa).

The 83-residue stretch at 23 to 105 (SQPVPEIDTL…LRLGRGRLGH (83 aa)) folds into the Chorismate mutase domain. Chorismate contacts are provided by Arg61, Val70, and Glu74.

In terms of assembly, homodimer. Interacts with AroG.

The protein resides in the cytoplasm. It carries out the reaction chorismate = prephenate. It functions in the pathway metabolic intermediate biosynthesis; prephenate biosynthesis; prephenate from chorismate: step 1/1. Its activity is regulated as follows. The formation of the complex with AroG activates the chorismate mutase activity. In terms of biological role, catalyzes the Claisen rearrangement of chorismate to prephenate. Probably involved in the aromatic amino acid biosynthesis. This chain is Intracellular chorismate mutase, found in Mycobacterium bovis (strain ATCC BAA-935 / AF2122/97).